Reading from the N-terminus, the 364-residue chain is MEASFENGRKRSSSSSSEEESAFSFAMELAAGSVLPMVIKSAIDLNLLELIKRGGEEGASAYELAAQINAENPKAAAEMIDRILQLLAAHSVLTCRVETPPSRRRRYSLAAVCKFLTRDEDGASLAPLSLLVQDRVFMEPWYHLKDVIVEGGVAFERAYGVHAFEYHAKDPKFNKIFNQAMHNQSIIFMKRILEIYKGFEGVKSLVDVGGGTGASSKMIVSKYPLIKAINFDLPHVIQDASPHPEVEHVGGDMFVSVPKADAIFLKWICHDWSDEHCRKLLKNCYDAILGNGKVIIAESTLPEDPNSGPDTIHAIRGDVIMLTVNPGGKERTEKEFRTLALQAGFKRLVKVCAAFHTCIMECHK.

Residue D232 participates in S-adenosyl-L-methionine binding. H270 serves as the catalytic Proton acceptor.

This sequence belongs to the class I-like SAM-binding methyltransferase superfamily. Cation-independent O-methyltransferase family. In terms of assembly, homodimer.

It catalyses the reaction quercetin + S-adenosyl-L-methionine = isorhamnetin + S-adenosyl-L-homocysteine + H(+). The enzyme catalyses luteolin + S-adenosyl-L-methionine = chrysoeriol + S-adenosyl-L-homocysteine + H(+). The catalysed reaction is a 3'-hydroxyflavone + S-adenosyl-L-methionine = a 3'-methoxyflavone + S-adenosyl-L-homocysteine + H(+). It carries out the reaction rhamnetin + S-adenosyl-L-methionine = rhamnacene + S-adenosyl-L-homocysteine + H(+). It catalyses the reaction 3',4',7,8-tetrahydroxyflavone + S-adenosyl-L-methionine = 4',7,8-trihydroxy-3'-methoxyflavone-7-olate + S-adenosyl-L-homocysteine + H(+). The enzyme catalyses taxifolin + S-adenosyl-L-methionine = taxifolin 3'-methyl ether + S-adenosyl-L-homocysteine + H(+). Its pathway is flavonoid metabolism. Flavonoid 3'-O-methyltransferase involved in the biosynthesis of polymethoxylated flavonoids natural products such as pebrellin, aroma compounds which contribute to the flavor of peppermint, and exhibit pharmacological activities such as anti-allergic, anti-oxidant, antibacterial, anti-proliferative, and anti-inflammatory effects. Catalyzes S-adenosylmethionine-dependent regioselective 3'-O-methylation of flavonoids; active on various hydroxylated flavonoid substrates, including quercetin, rhamnetin, luteolin (LUT), 7,8,3'4'-tetrahydroxy-flavone and taxifolin, and, with a lower efficiency, eupatorin and hesperetin. In Mentha piperita (Peppermint), this protein is Flavonoid 3'-O-methyltransferase 3.